Consider the following 545-residue polypeptide: Glucose-6-phosphate isomerase (545 aa).

Residue Glu-349 is the Proton donor of the active site. Catalysis depends on residues His-380 and Lys-509.

The protein belongs to the GPI family.

Its subcellular location is the cytoplasm. It carries out the reaction alpha-D-glucose 6-phosphate = beta-D-fructose 6-phosphate. It functions in the pathway carbohydrate biosynthesis; gluconeogenesis. The protein operates within carbohydrate degradation; glycolysis; D-glyceraldehyde 3-phosphate and glycerone phosphate from D-glucose: step 2/4. In terms of biological role, catalyzes the reversible isomerization of glucose-6-phosphate to fructose-6-phosphate. The protein is Glucose-6-phosphate isomerase of Chelativorans sp. (strain BNC1).